A 311-amino-acid polypeptide reads, in one-letter code: Homeobox-leucine zipper protein ATHB-6 (311 aa).

The segment covering 1–10 (MMKRLSSSDS) has biased composition (polar residues). Positions 1–32 (MMKRLSSSDSVGGLISLCPTTSTDEQSPRRYG) are disordered. Positions 1–43 (MMKRLSSSDSVGGLISLCPTTSTDEQSPRRYGGREFQSMLEGY) are interaction with ABI1. The homeobox DNA-binding region spans 59-118 (LSEKKRRLSINQVKALEKNFELENKLEPERKVKLAQELGLQPRQVAVWFQNRRARWKTKQ). The tract at residues 119–154 (LEKDYGVLKTQYDSLRHNFDSLRRDNESLLQEISKL) is leucine-zipper. The tract at residues 157 to 183 (KLNGGGGEEEEEENNAAVTTESDISVK) is disordered. The tract at residues 218–311 (LRDLLPLKAA…HWYSTVDHWN (94 aa)) is interaction with ABI1.

It belongs to the HD-ZIP homeobox family. Class I subfamily. Interacts with ABI1. Post-translationally, phosphorylated by PKA. Reversible inactivation of the binding to DNA by phosphorylation. Widely expressed.

It is found in the nucleus. In terms of biological role, transcription activator that may act as growth regulators in response to water deficit. Interacts with the core sequence 5'-CAATTATTA-3' of promoters in response to ABA and in an ABI1-dependent manner. Involved in the negative regulation of the ABA signaling pathway. The chain is Homeobox-leucine zipper protein ATHB-6 (ATHB-6) from Arabidopsis thaliana (Mouse-ear cress).